Consider the following 254-residue polypeptide: Small ribosomal subunit protein uS2 (254 aa).

This sequence belongs to the universal ribosomal protein uS2 family.

The polypeptide is Small ribosomal subunit protein uS2 (Borrelia duttonii (strain Ly)).